The following is a 166-amino-acid chain: Phospholipase A2 inhibitor clone 06/08 (166 aa).

The N-terminal stretch at 1–19 is a signal peptide; sequence MRLILLSGLLLLGIFLANG. Positions 46–161 constitute a C-type lectin domain; the sequence is LRGAFLTVYK…CDDNLLVVCE (116 aa). N-linked (GlcNAc...) asparagine glycans are attached at residues Asn61 and Asn122. Disulfide bonds link Cys83/Cys160 and Cys138/Cys152.

The protein belongs to the alpha-type phospholipase A2 inhibitor family. Homotrimer; non-covalently linked. Expressed by the liver.

It is found in the secreted. Its function is as follows. This phospholipase A2 inhibitor binds directly phospholipase A2 in the presence or absence of calcium. The chain is Phospholipase A2 inhibitor clone 06/08 from Bothrops neuwiedi (Neuwied's lancehead).